The chain runs to 192 residues: Protein FAM169BP (192 aa).

Residues 121–192 (YQAHPGNSED…PPGKLTRSSP (72 aa)) form a disordered region. Residues 159–177 (EELEDTKDDPECGVEEEDA) show a composition bias toward acidic residues.

The protein belongs to the FAM169 family.

The chain is Protein FAM169BP from Homo sapiens (Human).